The primary structure comprises 721 residues: Polyribonucleotide nucleotidyltransferase (721 aa).

Residues aspartate 490 and aspartate 496 each coordinate Mg(2+). A KH domain is found at proline 557–leucine 618. In terms of domain architecture, S1 motif spans glycine 625–proline 693. The segment at glutamate 696 to glutamate 721 is disordered.

The protein belongs to the polyribonucleotide nucleotidyltransferase family. Requires Mg(2+) as cofactor.

The protein resides in the cytoplasm. The catalysed reaction is RNA(n+1) + phosphate = RNA(n) + a ribonucleoside 5'-diphosphate. Functionally, involved in mRNA degradation. Catalyzes the phosphorolysis of single-stranded polyribonucleotides processively in the 3'- to 5'-direction. In Deinococcus geothermalis (strain DSM 11300 / CIP 105573 / AG-3a), this protein is Polyribonucleotide nucleotidyltransferase.